We begin with the raw amino-acid sequence, 1312 residues long: Retinoblastoma-like protein A (1312 aa).

Disordered stretches follow at residues 1–67, 168–231, 336–359, 536–611, 987–1023, 1168–1236, and 1249–1312; these read MMAH…NNEN, SSSS…KNSS, HNYN…NNNN, NNNN…IYGT, NNNN…NNNN, KKND…NNTE, and EESP…RLKS. Over residues 10–67 the composition is skewed to low complexity; the sequence is TNINTKTTAPTTTTTEQQPEQQQQQPEQQQQEKQNNNNNNNNNNNNNNNINNNENNEN. A coiled-coil region spans residues 36–117; it reads EQQQQEKQNN…TSSALNVDQD (82 aa). The segment covering 168-179 has biased composition (polar residues); the sequence is SSSSFQPDNNSK. Over residues 180 to 189 the composition is skewed to basic residues; it reads IKGRKIRKTN. Positions 195–230 form a coiled coil; sequence NNDSNEEEEETTTDTEEEEEEDTLLNENNNSINKNS. Acidic residues predominate over residues 198 to 218; the sequence is SNEEEEETTTDTEEEEEEDTL. 3 stretches are compositionally biased toward low complexity: residues 219–231, 337–359, and 536–595; these read LNEN…KNSS, NYNN…NNNN, and NNNN…SSSS. Composition is skewed to low complexity over residues 1185–1234, 1251–1275, and 1286–1305; these read NNNN…NNNN, SPST…NNNK, and SPSS…SSSG.

Belongs to the retinoblastoma protein (RB) family.

The protein resides in the nucleus. Its function is as follows. Key regulator of entry into cell division. Directly involved in heterochromatin formation by maintaining overall chromatin structure and, in particular, that of constitutive heterochromatin by stabilizing histone methylation. Controls histone H4 'Lys-20' trimethylation. Probably acts as a transcription repressor by recruiting chromatin-modifying enzymes to promoters. Plays a dual role, regulating cell-cycle progression and transcriptional events leading to terminal differentiation. In the absence of a G1 phase, functions in late G2 controlling the expression of both S-phase and mitotic genes. Controls stalk/spore preference by suppressing the DIF response in cells destined for the spore pathway. DIF is a chlorinated hydroxyphenone made by cells of spore pathway that promotes stalk differentiation. This is Retinoblastoma-like protein A from Dictyostelium discoideum (Social amoeba).